Consider the following 91-residue polypeptide: Small ribosomal subunit protein bS16 (91 aa).

This sequence belongs to the bacterial ribosomal protein bS16 family.

This chain is Small ribosomal subunit protein bS16, found in Staphylococcus haemolyticus (strain JCSC1435).